The primary structure comprises 137 residues: Glutamate mutase sigma subunit (137 aa).

Residues 3–137 (KKTIVLGVIG…ADLKKDLNIE (135 aa)) form the B12-binding domain. Adenosylcob(III)alamin is bound by residues 13–17 (SDCHA), H16, 61–63 (SSL), and 93–97 (NIVVG).

This sequence belongs to the methylaspartate mutase GlmS subunit family. In terms of assembly, heterotetramer composed of 2 epsilon subunits (GlmE) and 2 sigma subunits (GlmS). GlmE exists as a homodimer and GlmS as a monomer. Adenosylcob(III)alamin is required as a cofactor.

It catalyses the reaction (2S,3S)-3-methyl-L-aspartate = L-glutamate. It functions in the pathway amino-acid degradation; L-glutamate degradation via mesaconate pathway; acetate and pyruvate from L-glutamate: step 1/4. With respect to regulation, competitively inhibited by (2S,4S)-4-fluoroglutamate, 2-methyleneglutarate, (2R,3RS)-3-fluoroglutamate and (S)-3-methylitaconate. Its function is as follows. Catalyzes the carbon skeleton rearrangement of L-glutamate to L-threo-3-methylaspartate ((2S,3S)-3-methylaspartate). This is Glutamate mutase sigma subunit from Clostridium cochlearium.